The primary structure comprises 216 residues: N-(5'-phosphoribosyl)anthranilate isomerase (216 aa).

This sequence belongs to the TrpF family.

The enzyme catalyses N-(5-phospho-beta-D-ribosyl)anthranilate = 1-(2-carboxyphenylamino)-1-deoxy-D-ribulose 5-phosphate. Its pathway is amino-acid biosynthesis; L-tryptophan biosynthesis; L-tryptophan from chorismate: step 3/5. In Methanopyrus kandleri (strain AV19 / DSM 6324 / JCM 9639 / NBRC 100938), this protein is N-(5'-phosphoribosyl)anthranilate isomerase.